The following is a 152-amino-acid chain: UPF0178 protein SAS0646 (152 aa).

It belongs to the UPF0178 family.

The chain is UPF0178 protein SAS0646 from Staphylococcus aureus (strain MSSA476).